The sequence spans 117 residues: Cuticle protein CP1246 (117 aa).

4 repeat units span residues 1-17 (NYGE…LVQF), 26-43 (AEIG…HVQF), 67-84 (QSYG…NRQF), and 93-110 (VLVG…NVQF).

As to expression, calcified shell.

The sequence is that of Cuticle protein CP1246 from Cancer pagurus (Rock crab).